The chain runs to 263 residues: 5'-nucleotidase SurE (263 aa).

Positions 8, 9, 43, and 96 each coordinate a divalent metal cation.

It belongs to the SurE nucleotidase family. A divalent metal cation is required as a cofactor.

It localises to the cytoplasm. It catalyses the reaction a ribonucleoside 5'-phosphate + H2O = a ribonucleoside + phosphate. Functionally, nucleotidase that shows phosphatase activity on nucleoside 5'-monophosphates. This Jannaschia sp. (strain CCS1) protein is 5'-nucleotidase SurE.